A 387-amino-acid chain; its full sequence is 8-amino-7-oxononanoate synthase (387 aa).

Substrate is bound by residues R31 and R38. 118 to 119 (GY) is a pyridoxal 5'-phosphate binding site. H143 provides a ligand contact to substrate. Residues S191, 216-219 (DDAH), and 236-239 (TLSK) contribute to the pyridoxal 5'-phosphate site. N6-(pyridoxal phosphate)lysine is present on K239. Residue T348 participates in substrate binding.

The protein belongs to the class-II pyridoxal-phosphate-dependent aminotransferase family. BioF subfamily. As to quaternary structure, homodimer. It depends on pyridoxal 5'-phosphate as a cofactor.

The catalysed reaction is 6-carboxyhexanoyl-[ACP] + L-alanine + H(+) = (8S)-8-amino-7-oxononanoate + holo-[ACP] + CO2. The protein operates within cofactor biosynthesis; biotin biosynthesis. Functionally, catalyzes the decarboxylative condensation of pimeloyl-[acyl-carrier protein] and L-alanine to produce 8-amino-7-oxononanoate (AON), [acyl-carrier protein], and carbon dioxide. The sequence is that of 8-amino-7-oxononanoate synthase from Methylorubrum populi (strain ATCC BAA-705 / NCIMB 13946 / BJ001) (Methylobacterium populi).